The sequence spans 367 residues: Tape measure protein (367 aa).

It belongs to the skunalikevirus tape measure protein family.

The protein resides in the virion. Functionally, tape measure protein. Serves as a base for tail tube protein polymerization and acts as a template for tail length determination. In Lactococcus lactis (Lactococcus lactis bacteriophage F4-1), this protein is Tape measure protein.